Reading from the N-terminus, the 700-residue chain is Neoverrucotoxin subunit beta (700 aa).

The region spanning 506-700 is the B30.2/SPRY domain; it reads HMPGVETIKD…QKVNGQIKLL (195 aa).

Belongs to the SNTX/VTX toxin family. In terms of assembly, heterodimer of alpha and beta subunits. Not glycosylated. Post-translationally, four intrachain disulfide linkages are present in the heterodimer. No interchain disulfide bound links the two subunits. In terms of tissue distribution, expressed by the venom gland.

Its subcellular location is the secreted. In terms of biological role, has hemolytic and lethal activities. Its hemolytic activity is inhibited by anionic lipids, especially potently by cardiolipin. The polypeptide is Neoverrucotoxin subunit beta (Synanceia verrucosa (Reef stonefish)).